An 802-amino-acid chain; its full sequence is Leucine--tRNA ligase (802 aa).

Residues 41–52 (PYPSGQGLHVGH) carry the 'HIGH' region motif. The 'KMSKS' region signature appears at 580–584 (KMSKS). Lys-583 lines the ATP pocket.

Belongs to the class-I aminoacyl-tRNA synthetase family.

The protein localises to the cytoplasm. It catalyses the reaction tRNA(Leu) + L-leucine + ATP = L-leucyl-tRNA(Leu) + AMP + diphosphate. The chain is Leucine--tRNA ligase from Alkaliphilus oremlandii (strain OhILAs) (Clostridium oremlandii (strain OhILAs)).